We begin with the raw amino-acid sequence, 307 residues long: 2,4-diacetylphloroglucinol hydrolase (307 aa).

Histidine 142, glutamate 173, histidine 283, and glutamate 287 together coordinate Zn(2+).

It belongs to the DAPG/phloretin hydrolase family. The cofactor is Zn(2+).

It catalyses the reaction 2,4-diacetylphloroglucinol + H2O = 2-acetylphloroglucinol + acetate. Activity is strongly reduced by pyoluteorin, an antifungal compound produced by the bacterium. In terms of biological role, hydrolase that specifically degrades the potent antimicrobial compound 2,4-diacetylphloroglucinol (DAPG) to equimolar amounts of mildly toxic monoacetylphloroglucinol (MAPG) and acetate. Does not degrade other compounds with structures similar to DAPG, such as MAPG and triacetylphloroglucinol, suggesting strict substrate specificity. Degradation of DAPG to MAPG may provide an additional means of fine-tuning levels of this antibiotic or may help avoid accumulation of a metabolite that at high levels may become toxic to the producing bacterium. The chain is 2,4-diacetylphloroglucinol hydrolase from Pseudomonas protegens (strain DSM 19095 / LMG 27888 / CFBP 6595 / CHA0).